Consider the following 97-residue polypeptide: Small ribosomal subunit protein uS17 (97 aa).

Residues 1–20 form a disordered region; sequence MSEATVNDNAAVKNEKGARK.

Belongs to the universal ribosomal protein uS17 family. Part of the 30S ribosomal subunit.

One of the primary rRNA binding proteins, it binds specifically to the 5'-end of 16S ribosomal RNA. The sequence is that of Small ribosomal subunit protein uS17 from Corynebacterium jeikeium (strain K411).